A 251-amino-acid chain; its full sequence is Prolactin-7B1 (251 aa).

The signal sequence occupies residues 1–29; that stretch reads MHLSLTQQCLWPLQILLVSNLLLWENVAA. N-linked (GlcNAc...) asparagine glycosylation is present at asparagine 73. Disulfide bonds link cysteine 100/cysteine 216 and cysteine 233/cysteine 241.

The protein belongs to the somatotropin/prolactin family.

The protein resides in the secreted. This Rattus norvegicus (Rat) protein is Prolactin-7B1 (Prl7b1).